The primary structure comprises 205 residues: Small ribosomal subunit protein uS4 (205 aa).

Residues 18 to 49 (NIWGRPKSPVNKREYGPGQHGQRRKGKLSDFG) form a disordered region. Residues 94–157 (RRLDTVVYRA…KQLALVLEAN (64 aa)) form the S4 RNA-binding domain.

This sequence belongs to the universal ribosomal protein uS4 family. In terms of assembly, part of the 30S ribosomal subunit. Contacts protein S5. The interaction surface between S4 and S5 is involved in control of translational fidelity.

In terms of biological role, one of the primary rRNA binding proteins, it binds directly to 16S rRNA where it nucleates assembly of the body of the 30S subunit. With S5 and S12 plays an important role in translational accuracy. This chain is Small ribosomal subunit protein uS4, found in Nitrobacter hamburgensis (strain DSM 10229 / NCIMB 13809 / X14).